A 166-amino-acid chain; its full sequence is Phosphopantetheine adenylyltransferase (166 aa).

A substrate-binding site is contributed by Thr-10. ATP is bound by residues Thr-10 to Phe-11 and His-18. The substrate site is built by Lys-42, Leu-75, and Arg-89. ATP-binding positions include Gly-90–Arg-92, Glu-100, and Tyr-125–Thr-131.

The protein belongs to the bacterial CoaD family. In terms of assembly, homohexamer. Mg(2+) serves as cofactor.

It is found in the cytoplasm. It carries out the reaction (R)-4'-phosphopantetheine + ATP + H(+) = 3'-dephospho-CoA + diphosphate. It functions in the pathway cofactor biosynthesis; coenzyme A biosynthesis; CoA from (R)-pantothenate: step 4/5. Its function is as follows. Reversibly transfers an adenylyl group from ATP to 4'-phosphopantetheine, yielding dephospho-CoA (dPCoA) and pyrophosphate. The chain is Phosphopantetheine adenylyltransferase from Chlorobaculum parvum (strain DSM 263 / NCIMB 8327) (Chlorobium vibrioforme subsp. thiosulfatophilum).